The following is a 408-amino-acid chain: Leucine aminopeptidase 1 (408 aa).

A signal peptide spans 1-16; the sequence is MKVSSAIALLLPVVAA. The propeptide occupies 17–89; sequence RFVDSAFEQD…SAQSATTGPA (73 aa). 3 N-linked (GlcNAc...) asparagine glycosylation sites follow: Asn95, Asn108, and Asn182. Zn(2+) is bound by residues His190, Asp209, Glu248, and Asp275. An intrachain disulfide couples Cys324 to Cys328. His357 is a binding site for Zn(2+).

Belongs to the peptidase M28 family. M28E subfamily. Monomer. Zn(2+) serves as cofactor.

The protein localises to the secreted. Extracellular aminopeptidase that allows assimilation of proteinaceous substrates. The polypeptide is Leucine aminopeptidase 1 (LAP1) (Grosmannia clavigera (strain kw1407 / UAMH 11150) (Blue stain fungus)).